The sequence spans 767 residues: Serine/threonine-protein kinase DCLK2 (767 aa).

The segment at 1–44 (MASTRSIELEHFEERDKRPRPGSRRGAPSSSGGSSISGPKGNGL) is disordered. Over residues 7–19 (IELEHFEERDKRP) the composition is skewed to basic and acidic residues. Low complexity predominate over residues 24 to 43 (RRGAPSSSGGSSISGPKGNG). The residue at position 61 (T61) is a Phosphothreonine. 2 Doublecortin domains span residues 72–158 (KKAR…VDYT) and 196–279 (KLVT…AQDD). Over residues 301–311 (KYSGSRSPGLS) the composition is skewed to low complexity. Residues 301–391 (KYSGSRSPGL…GPELDRCMSP (91 aa)) form a disordered region. Polar residues predominate over residues 327-338 (SAYSTAKSPVNG). Residues 339–362 (TPSSQLSTPKSTKSSSSSPTSPGS) show a composition bias toward low complexity. Over residues 369 to 380 (ISAQGRSSSNVN) the composition is skewed to polar residues. S377 carries the phosphoserine modification. The 258-residue stretch at 409 to 666 (YRIGKVIGDG…AGEILSHPWV (258 aa)) folds into the Protein kinase domain. ATP is bound by residues 415–423 (IGDGNFAVV) and K438. D530 (proton acceptor) is an active-site residue. S662 is modified (phosphoserine). T681 carries the post-translational modification Phosphothreonine. The span at 721–734 (HCRDSSKSSREQTS) shows a compositional bias: basic and acidic residues. Residues 721 to 767 (HCRDSSKSSREQTSAREAPPPPESPRPPGPPATSGCDPAGTWRRHRD) form a disordered region. Over residues 738–751 (APPPPESPRPPGPP) the composition is skewed to pro residues.

Belongs to the protein kinase superfamily. CAMK Ser/Thr protein kinase family. CaMK subfamily. As to quaternary structure, interacts with MAPK8IP1/JIP-1, MAPK8IP2/JIP-2, MAPK9/JNK2, PPP1R9B/NEURABIN-2 and actin. Binds to and stabilizes microtubules; binding affinity is strongly reduced by autophosphorylation. Post-translationally, autophosphorylated.

It localises to the cytoplasm. The protein resides in the cytoskeleton. The enzyme catalyses L-seryl-[protein] + ATP = O-phospho-L-seryl-[protein] + ADP + H(+). It carries out the reaction L-threonyl-[protein] + ATP = O-phospho-L-threonyl-[protein] + ADP + H(+). Functionally, protein kinase with a significantly reduced Ca(2+)+/CAM affinity and dependence compared to other members of the CaMK family. May play a role in the down-regulation of CRE-dependent gene activation probably by phosphorylation of the CREB coactivator CRTC2/TORC2 and the resulting retention of TORC2 in the cytoplasm. The chain is Serine/threonine-protein kinase DCLK2 (Dclk2) from Rattus norvegicus (Rat).